The chain runs to 136 residues: MNSQIKTKAVYWGTGRRKTSVARVRLIPGNGLITINGRSGDDYLNFNPLHLNSVKAPLQTLGLENSYDILVNVFGGGLTGQADAIKQGAARALCELSPDNRKPLKTEGHLSRDPRAKERRKYGLKKARKAPQFSKR.

The interval 97 to 136 is disordered; that stretch reads SPDNRKPLKTEGHLSRDPRAKERRKYGLKKARKAPQFSKR. Positions 98–116 are enriched in basic and acidic residues; sequence PDNRKPLKTEGHLSRDPRA. Over residues 117-136 the composition is skewed to basic residues; that stretch reads KERRKYGLKKARKAPQFSKR.

The protein belongs to the universal ribosomal protein uS9 family.

The polypeptide is Small ribosomal subunit protein uS9 (Prochlorococcus marinus (strain MIT 9215)).